Reading from the N-terminus, the 585-residue chain is Arginine--tRNA ligase (585 aa).

The short motif at 131-141 (ANPTGPMHVGH) is the 'HIGH' region element.

It belongs to the class-I aminoacyl-tRNA synthetase family. As to quaternary structure, monomer.

Its subcellular location is the cytoplasm. The enzyme catalyses tRNA(Arg) + L-arginine + ATP = L-arginyl-tRNA(Arg) + AMP + diphosphate. This is Arginine--tRNA ligase from Brucella ovis (strain ATCC 25840 / 63/290 / NCTC 10512).